The sequence spans 671 residues: Solute carrier family 53 member 1 (671 aa).

Positions 1 to 193 are important for promoting lysosomal/autophagosomal degradation of PXo bodies following inorganic phosphate (Pi) starvation; sequence MKFAEHLTAH…DIDRLIQETE (193 aa). Residues 1 to 228 lie on the Cytoplasmic side of the membrane; sequence MKFAEHLTAH…EQQSPWTTFK (228 aa). The SPX domain occupies 2 to 218; the sequence is KFAEHLTAHI…MKRLRVPPLG (217 aa). The interval 152 to 159 is important for inositol polyphosphate binding; sequence KILKKHDK. A helical membrane pass occupies residues 229-253; the sequence is VGLFSGAFVVLFITVVIAAMFYGFG. Topologically, residues 254-255 are extracellular; sequence EN. The helical transmembrane segment at 256–287 threads the bilayer; that stretch reads WRAGMRMFRAPFLIIECLFLWGVNVYGWRSSG. The Cytoplasmic portion of the chain corresponds to 288–300; sequence VNHVLIFELDPRN. The chain crosses the membrane as a helical span at residues 301 to 328; it reads HLSEQNIMEVASVFGVIWACCVLSYIFC. Residues 329-334 lie on the Extracellular side of the membrane; that stretch reads DPLGIP. The chain crosses the membrane as a helical span at residues 335-356; sequence QYAAPLCLYTLMAAFLLNPTKT. An intramembrane region (helical) is located at residues 357–374; it reads FHHEARFWAIRILIRVIM. The Cytoplasmic segment spans residues 375–379; sequence APFCF. The chain crosses the membrane as a discontinuously helical span at residues 380 to 413; it reads VNFADFWLADQLNSMVPAFLDIPFLICFFGRSPT. Positions 389 and 392 each coordinate phosphate. Residues 414–415 are Extracellular-facing; that stretch reads WH. Residues 416–455 form a discontinuously helical membrane-spanning segment; that stretch reads KAGKAASHCVEYVSLLHPIVAIMPAYFRFAQCIRRYRDTK. An EXS domain is found at 423-627; sequence HCVEYVSLLH…DCSDQTTILR (205 aa). A topological domain (cytoplasmic) is located at residue Glu-456. Residues 457 to 488 form a helical membrane-spanning segment; the sequence is SFPHLVNAAKYATSFFVVIFAHKYHTTTDTYP. Positions 466 and 467 each coordinate phosphate. Topologically, residues 489 to 491 are extracellular; sequence LSK. Residues 492 to 519 traverse the membrane as a helical segment; that stretch reads ENPWFYCWITAAIFSSCYAYTWDIKMDW. At 520 to 538 the chain is on the cytoplasmic side; it reads GLFDSKAGDNRFLREEIVY. Residues 539–570 form a discontinuously helical membrane-spanning segment; that stretch reads SSTWFYYFGIIEDLILRFSWTLSMSLIEAGYI. 3 residues coordinate phosphate: Arg-555, Arg-586, and Arg-587. The chain crosses the membrane as a helical span at residues 571 to 609; it reads EGDVMMTILSPLEVFRRFIWNYFRLENEHLNNVGKFRAV. The Cytoplasmic portion of the chain corresponds to 610–671; that stretch reads RDISVAPMDC…QGESIEDLCS (62 aa).

Belongs to the SYG1 (TC 2.A.94) family. In terms of assembly, homodimer. Interacts with the FAR/SIN/STRIPAK complex members Cka and Pp2A-29B. Detected in PXo bodies found in the enterocytes and progenitors of the midgut and in the hindgut, but rarely occur in the Malpighian tubules, crop, brain, muscles and germlines (at protein level).

The protein localises to the membrane. It catalyses the reaction phosphate(in) = phosphate(out). In terms of biological role, inorganic ion transporter that mediates phosphate ion export across the cell membrane. Plays a major role in phosphate homeostasis, preventing intracellular phosphate accumulation and possible calcium phosphate precipitation, ultimately preserving calcium signaling. Binds inositol hexakisphosphate (Ins6P) and similar inositol polyphosphates, such as 5-diphospho-inositol pentakisphosphate (5-InsP7), which are important intracellular signaling molecules involved in regulation of phosphate flux. In enterocytes and differentiating progenitors of the gut, promotes the biogenesis and maintenance of organelles called PXo bodies that store intracellular inorganic phosphate (Pi), and also regulates Cka-JNK mediated tissue homeostasis in response to Pi availability in these tissues. Under conditions of adequate Pi, transports Pi into PXo bodies which convert and store the Pi in the form of phospholipids. It also inhibits Cka at the post-transcriptional level to prevent Cka-bsk/JNK mediated cell proliferation. Upon Pi starvation, Pxo expression is down-regulated resulting in the PXo bodies decreasing in phospholipid content until they undergo lysosomal/autophagosomal degradation and release the stored Pi back into the cytosol for use by the cell. Decrease in Pxo expression also activates the Cka protein, which moves to the nucleus to activate bsk/JNK which then induces nearby progenitor cells to proliferate and form new absorptive cells, probably helping the organism to cope with the nutrient deficiency by maximizing absorption of dietary Pi. This Drosophila melanogaster (Fruit fly) protein is Solute carrier family 53 member 1.